The sequence spans 708 residues: F-box protein MAX2 homolog A (708 aa).

Residues 2–49 enclose the F-box domain; that stretch reads ATQLNDLPDVILSNIIAAVTDVRSRNSTSFVCRKWLVLERSTRVSLTL.

In terms of assembly, part of a putative SCF (SKP1/Cullin/F-box) ubiquitin ligase complex. Interacts with DAD2. Interacts with KAI2IA in the presence of (-)-germacrene D. Mainly expressed in fully expanded leaves, lateral roots, axillary and shoot apex, and, to a lower extent, in internodes and nodes.

It localises to the nucleus. In terms of biological role, component of SCF(ASK-cullin-F-box) E3 ubiquitin ligase complexes, which may mediate the ubiquitination and subsequent proteasomal degradation of target proteins. Is necessary for responses to strigolactones and may be involved in the ubiquitin-mediated degradation of specific proteins that activate axillary growth. Targets probably SMAX1A to degradation upon the formation of an E3 SCF ubiquitin ligase complex (ASK-cullin-F-box) containing MAX2A and KAI2IA in response to (-)-germacrene D in the stigma. The protein is F-box protein MAX2 homolog A of Petunia hybrida (Petunia).